The sequence spans 431 residues: BEL1-like homeodomain protein 5 (431 aa).

An SR/KY domain region spans residues 80–96 (PIYLKAAQELLNEIVNV). A BELL domain region spans residues 128–199 (GVAALQMKKA…AVKDMISLQI (72 aa)). The homeobox DNA-binding region spans 228-290 (AWRPQRGLPE…NARVRMWKPL (63 aa)). Basic and acidic residues predominate over residues 302–312 (EESRKGSDRYS). Positions 302–333 (EESRKGSDRYSTKGSSSKQPYNNTTSNESSNT) are disordered. Positions 313–322 (TKGSSSKQPY) are enriched in polar residues. Positions 323–333 (NNTTSNESSNT) are enriched in low complexity.

Belongs to the TALE/BELL homeobox family. As to quaternary structure, may form heterodimeric complexes with TALE/KNOX proteins. Interacts with OFP1.

Its subcellular location is the nucleus. This is BEL1-like homeodomain protein 5 (BLH5) from Arabidopsis thaliana (Mouse-ear cress).